Here is a 365-residue protein sequence, read N- to C-terminus: Putative glycosyltransferase C06E1.7 (365 aa).

Belongs to the glycosyltransferase 11 family.

The sequence is that of Putative glycosyltransferase C06E1.7 from Caenorhabditis elegans.